The chain runs to 268 residues: Undecaprenyl-diphosphatase (268 aa).

The next 8 membrane-spanning stretches (helical) occupy residues 3–23, 46–66, 84–104, 107–127, 144–164, 184–204, 218–238, and 248–268; these read VFNLLEAAFLGLIEGLTEFIP, FEVLIQLGAILAILTVYSAKL, FGILVAFLPAAVIGALAHGFI, VLFETPMLVCIMLIIGGFILL, YPLPMCLAIGFIQCLAMIPGV, AAEFSFFLAMPTMAGAFAYDL, LIGVGFVMAFISGVFVVRYLL, and LFGWWRLIVGSVGLAALLVWG.

Belongs to the UppP family.

It localises to the cell inner membrane. The enzyme catalyses di-trans,octa-cis-undecaprenyl diphosphate + H2O = di-trans,octa-cis-undecaprenyl phosphate + phosphate + H(+). Catalyzes the dephosphorylation of undecaprenyl diphosphate (UPP). Confers resistance to bacitracin. This chain is Undecaprenyl-diphosphatase, found in Brucella anthropi (strain ATCC 49188 / DSM 6882 / CCUG 24695 / JCM 21032 / LMG 3331 / NBRC 15819 / NCTC 12168 / Alc 37) (Ochrobactrum anthropi).